The following is a 265-amino-acid chain: Hydroxyacylglutathione hydrolase (265 aa).

Residues H53, H55, D57, H58, H109, D126, and H164 each contribute to the Zn(2+) site.

This sequence belongs to the metallo-beta-lactamase superfamily. Glyoxalase II family. In terms of assembly, monomer. The cofactor is Zn(2+).

The catalysed reaction is an S-(2-hydroxyacyl)glutathione + H2O = a 2-hydroxy carboxylate + glutathione + H(+). Its pathway is secondary metabolite metabolism; methylglyoxal degradation; (R)-lactate from methylglyoxal: step 2/2. In terms of biological role, thiolesterase that catalyzes the hydrolysis of S-D-lactoyl-glutathione to form glutathione and D-lactic acid. In Dechloromonas aromatica (strain RCB), this protein is Hydroxyacylglutathione hydrolase.